An 84-amino-acid chain; its full sequence is MSSRSTGERPFTDIITSTRYWIIHIPAITILFASGFLFVYTGLAYDVFGTPRPDEYYNSDNTKKPLVNKRFEAKQQLDEATKNK.

The chain crosses the membrane as a helical span at residues 22–36 (IIHIPAITILFASGF). Residue histidine 24 coordinates heme.

It belongs to the PsbE/PsbF family. As to quaternary structure, heterodimer of an alpha subunit and a beta subunit. PSII is composed of 1 copy each of membrane proteins PsbA, PsbB, PsbC, PsbD, PsbE, PsbF, PsbH, PsbI, PsbJ, PsbK, PsbL, PsbM, PsbT, PsbX, Psb30/Ycf12, peripheral proteins PsbO, CyanoQ (PsbQ), PsbU, PsbV and a large number of cofactors. It forms dimeric complexes. It depends on heme b as a cofactor.

It is found in the cell inner membrane. In terms of biological role, this b-type cytochrome is tightly associated with the reaction center of photosystem II (PSII). PSII is a light-driven water:plastoquinone oxidoreductase that uses light energy to abstract electrons from H(2)O, generating O(2) and a proton gradient subsequently used for ATP formation. It consists of a core antenna complex that captures photons, and an electron transfer chain that converts photonic excitation into a charge separation. The chain is Cytochrome b559 subunit alpha from Gloeobacter violaceus (strain ATCC 29082 / PCC 7421).